The following is a 666-amino-acid chain: Vicilin-like antimicrobial peptides 2-2 (666 aa).

The signal sequence occupies residues 1–27 (MAINTSNLCSLLFLLSLFLLSTTVSLA). 2 disordered regions span residues 161-191 (QQKR…DPQQ) and 221-251 (RQHG…SDNP). A compositionally biased stretch (basic and acidic residues) spans 239–251 (RYEEGEEKQSDNP). Cupin type-1 domains lie at 271 to 410 (SVLE…ERLR) and 455 to 625 (YNLF…KEVE).

This sequence belongs to the 7S seed storage protein family.

The protein resides in the secreted. Its function is as follows. Antimicrobial peptides 2b, 2c and 2d have antibacterial and antifungal activity against a range of species. This is Vicilin-like antimicrobial peptides 2-2 from Macadamia integrifolia (Macadamia nut).